Reading from the N-terminus, the 210-residue chain is LexA repressor (210 aa).

A DNA-binding region (H-T-H motif) is located at residues 30 to 50; that stretch reads RVEIAREIGFKSPNAAEEHLK. Residues Ser-127 and Lys-164 each act as for autocatalytic cleavage activity in the active site.

This sequence belongs to the peptidase S24 family. As to quaternary structure, homodimer.

It catalyses the reaction Hydrolysis of Ala-|-Gly bond in repressor LexA.. Functionally, represses a number of genes involved in the response to DNA damage (SOS response), including recA and lexA. In the presence of single-stranded DNA, RecA interacts with LexA causing an autocatalytic cleavage which disrupts the DNA-binding part of LexA, leading to derepression of the SOS regulon and eventually DNA repair. This Actinobacillus pleuropneumoniae serotype 7 (strain AP76) protein is LexA repressor.